The chain runs to 142 residues: Large ribosomal subunit protein bL27m (142 aa).

A disordered region spans residues 27–48 (TKKSAGSTKNGRTSQPKNLGLK). A compositionally biased stretch (polar residues) spans 30–43 (SAGSTKNGRTSQPK).

This sequence belongs to the bacterial ribosomal protein bL27 family.

The protein resides in the mitochondrion. The protein is Large ribosomal subunit protein bL27m (mrpl27) of Dictyostelium discoideum (Social amoeba).